The primary structure comprises 718 residues: MNDSRNRGRKVTRKAGPPEAGQENHLDTPVFQAPDASSNQSAVKAETAGNDNRDAAQGAQGSQDSQGSQNAQGSQNRESGNNNRNRSNNNRRGGRGRRGSGNANEGANNNSGNQNRQGGNRGNRGGGRRNVVKSMQGADLTQRLPEPPKAPANGLRIYALGGISEIGRNMTVFEYNNRLLIVDCGVLFPSSGEPGVDLILPDFGPIEDHLHRVDALVVTHGHEDHIGAIPWLLKLRNDIPILASRFTLALIAAKCKEHRQRPKLIEVNEQSNEDRGPFNIRFWAVNHSIPDCLGLAIKTPAGLVIHTGDIKLDQTPPDGRPTDLPALSRFGDEGVDLMLCDSTNATTPGVSGSEADVAPTLKRLVGDAKQRVILASFASNVYRVQAAVDAAVASNRKVAFNGRSMIRNMEIAEKLGYLKAPRGTIISMDDASRMAPHKVMLITTGTQGEPMAALSRMARREHRQITVRDGDLIILSSSLVPGNEEAVFGVINMLAQIGATVVTGRDAKVHTSGHGYSGELLFLYNAARPKNAMPVHGEWRHLRANKELAISTGVNRDNVVLAQNGVVVDMVNGRAQVVGQIPVGNLYVDGVTMGDIDADILADRTSLGEGGLISITAVIDNRTGRLLERPTVQTSGFSEDAKSMMGEVTELSETTMNDLAAEGENDPYRMVQQLRRKLSRFVEQKWKRQPVIMPTVIPMTAETTHIGDDEVRASRESL.

Residues 1 to 130 form a disordered region; the sequence is MNDSRNRGRK…RGNRGGGRRN (130 aa). Composition is skewed to low complexity over residues 55 to 91 and 100 to 118; these read AAQG…NNNR and SGNA…NRQG. The Zn(2+) site is built by His220, His222, Asp224, His225, His287, and Asp309. Residue 510 to 514 participates in substrate binding; sequence HTSGH. His536 lines the Zn(2+) pocket.

This sequence belongs to the metallo-beta-lactamase superfamily. RNA-metabolizing metallo-beta-lactamase-like family. Bacterial RNase J subfamily. Homodimer, may be a subunit of the RNA degradosome. Zn(2+) is required as a cofactor.

The protein resides in the cytoplasm. Functionally, an RNase that has 5'-3' exonuclease and possibly endoonuclease activity. Involved in maturation of rRNA and in some organisms also mRNA maturation and/or decay. This chain is Ribonuclease J, found in Corynebacterium glutamicum (strain ATCC 13032 / DSM 20300 / JCM 1318 / BCRC 11384 / CCUG 27702 / LMG 3730 / NBRC 12168 / NCIMB 10025 / NRRL B-2784 / 534).